The sequence spans 119 residues: Immunoglobulin heavy variable 3-15 (119 aa).

The first 19 residues, 1–19 (MEFGLSWIFLAAILKGVQC), serve as a signal peptide directing secretion. The interval 20–44 (EVQLVESGGGLVKPGGSLRLSCAAS) is framework-1. One can recognise an Ig-like domain in the interval 20–119 (EVQLVESGGG…EDTAVYYCTT (100 aa)). C41 and C117 are joined by a disulfide. The interval 45–52 (GFTFSNAW) is complementarity-determining-1. The segment at 53 to 69 (MSWVRQAPGKGLEWVGR) is framework-2. Residues 70–79 (IKSKTDGGTT) form a complementarity-determining-2 region. A framework-3 region spans residues 80 to 117 (DYAAPVKGRFTISRDDSKNTLYLQMNSLKTEDTAVYYC). The complementarity-determining-3 stretch occupies residues 118 to 119 (TT).

As to quaternary structure, immunoglobulins are composed of two identical heavy chains and two identical light chains; disulfide-linked.

It is found in the secreted. Its subcellular location is the cell membrane. V region of the variable domain of immunoglobulin heavy chains that participates in the antigen recognition. Immunoglobulins, also known as antibodies, are membrane-bound or secreted glycoproteins produced by B lymphocytes. In the recognition phase of humoral immunity, the membrane-bound immunoglobulins serve as receptors which, upon binding of a specific antigen, trigger the clonal expansion and differentiation of B lymphocytes into immunoglobulins-secreting plasma cells. Secreted immunoglobulins mediate the effector phase of humoral immunity, which results in the elimination of bound antigens. The antigen binding site is formed by the variable domain of one heavy chain, together with that of its associated light chain. Thus, each immunoglobulin has two antigen binding sites with remarkable affinity for a particular antigen. The variable domains are assembled by a process called V-(D)-J rearrangement and can then be subjected to somatic hypermutations which, after exposure to antigen and selection, allow affinity maturation for a particular antigen. This Homo sapiens (Human) protein is Immunoglobulin heavy variable 3-15.